We begin with the raw amino-acid sequence, 492 residues long: Falcipain-3 (492 aa).

Residues 1 to 35 (MEYHMEYSPNEVIKQEREVFVGKEKSGSKFKRKRS) lie on the Cytoplasmic side of the membrane. A propeptide spans 1–242 (MEYHMEYSPN…LNLKTHGPFK (242 aa)) (activation peptide). The short motif at 16–25 (EREVFVGKEK) is the Bipartite vacuolar targeting signal 1 element. Residues 36–56 (IFIVLTVSICFMFALMLFYFT) traverse the membrane as a helical; Signal-anchor for type II membrane protein segment. The Lumenal portion of the chain corresponds to 57–492 (RNENNKTLFT…GTEAYVPLLE (436 aa)). N-linked (GlcNAc...) asparagine glycosylation occurs at asparagine 61. The Bipartite vacuolar targeting signal 2 signature appears at 84-105 (KSESGKKFIVSKLEELISSYDK). N-linked (GlcNAc...) asparagine glycosylation is present at asparagine 129. A Nose motif; required for the correct folding of the mature form motif is present at residues 251–268 (EANYEDVIKKYKPADAKL). 4 disulfides stabilise this stretch: cysteine 290-cysteine 331, cysteine 324-cysteine 365, cysteine 350-cysteine 370, and cysteine 419-cysteine 480. Residue cysteine 293 is part of the active site. Histidine 425 is a catalytic residue. The Arm motif; binds to host hemoglobin and required for the inhibitory interaction between the propeptide and the catalytic domain signature appears at 436 to 445 (DIYNEDTGRM). Asparagine 455 is a catalytic residue.

This sequence belongs to the peptidase C1 family. Post-translationally, auto-cleavage occurs at acidic pH. The proenzyme is the predominant form in late trophozoites and both the pro and mature enzyme are present in schizonts.

It is found in the membrane. The protein localises to the vacuole. Its subcellular location is the cytoplasmic vesicle membrane. Inhibited by cysteine protease inhibitor ICP. Cysteine protease which cleaves native host hemoglobin and globin in the food vacuole during the asexual blood stage. Preferentially cleaves substrates which have an arginine at the P1 position and a leucine at the P2 position. This Plasmodium falciparum (isolate 3D7) protein is Falcipain-3.